Reading from the N-terminus, the 192-residue chain is UPF0312 protein Avin_03250 (192 aa).

Residues 1-23 form the signal peptide; sequence MLKKTLAALALGSALLGAGQAMA.

Belongs to the UPF0312 family. Type 1 subfamily.

The protein localises to the periplasm. The protein is UPF0312 protein Avin_03250 of Azotobacter vinelandii (strain DJ / ATCC BAA-1303).